Here is a 194-residue protein sequence, read N- to C-terminus: Glycerol-3-phosphate acyltransferase (194 aa).

5 consecutive transmembrane segments (helical) span residues 2 to 22 (LIEI…TGLL), 51 to 71 (SVGI…VLAA), 80 to 100 (WIAL…FLGF), 112 to 132 (VFLG…VAVV), and 155 to 175 (FLSG…LVIW).

The protein belongs to the PlsY family. As to quaternary structure, probably interacts with PlsX.

Its subcellular location is the cell inner membrane. The catalysed reaction is an acyl phosphate + sn-glycerol 3-phosphate = a 1-acyl-sn-glycero-3-phosphate + phosphate. It participates in lipid metabolism; phospholipid metabolism. In terms of biological role, catalyzes the transfer of an acyl group from acyl-phosphate (acyl-PO(4)) to glycerol-3-phosphate (G3P) to form lysophosphatidic acid (LPA). This enzyme utilizes acyl-phosphate as fatty acyl donor, but not acyl-CoA or acyl-ACP. The protein is Glycerol-3-phosphate acyltransferase of Geobacter metallireducens (strain ATCC 53774 / DSM 7210 / GS-15).